Reading from the N-terminus, the 454-residue chain is MSELQKQWAKARLGSQALGQPPAEMPITTTMPEFNEADEDKEMAGPSPGGFPFDDDSSSASSVSSTGTVIPSPGRALFARPQGFASRSMDPIPWTTYFERELFLKEEAGPDSGSRTSNKNKPTSITYHAYLTSPVGKGPLFVTHHGAGSSGLSFAVLSSEIRKRLPNAGILSLDARGHGSTTVTAASSVPGEGDETTGQAPPPLDLSLSTLASDLFTVIQLTRTAMHWPELPPIILVGHSLGGAVVTELAKSYRLGPSLLGYAVLDVVEGCAMDALQSMQTYLSTRPQGFASLKDGIDWHVRSRTIRNSTSARTSVPGLLAPVEELQRPELQQLPRGVAGTQGTAKPWRWKTDLAATQPFWEDWFVGLSKKFLEARGGKMLLLAGTDRLDTELTIGQMQGKYALQVFPEAGHFIHEDLPEKTAIALVDFHRRNDRSQLVLPPKVSDLLAQGKKV.

Disordered regions lie at residues 1–69 and 181–203; these read MSEL…TGTV and TTVT…APPP. A compositionally biased stretch (low complexity) spans 44–69; sequence AGPSPGGFPFDDDSSSASSVSSTGTV. Catalysis depends on residues Ser240, Asp266, and His412.

Belongs to the AB hydrolase superfamily.

It catalyses the reaction [phosphatase 2A protein]-C-terminal L-leucine methyl ester + H2O = [phosphatase 2A protein]-C-terminal L-leucine + methanol + H(+). Functionally, demethylates proteins that have been reversibly carboxymethylated. Demethylates the phosphatase PP2A catalytic subunit. This is Protein phosphatase methylesterase 1 (pme-1) from Neurospora crassa (strain ATCC 24698 / 74-OR23-1A / CBS 708.71 / DSM 1257 / FGSC 987).